Here is a 204-residue protein sequence, read N- to C-terminus: Small ribosomal subunit protein uS4 (204 aa).

The region spanning 92–157 is the S4 RNA-binding domain; sequence RRLDALVLRS…KPLFEVAREG (66 aa).

This sequence belongs to the universal ribosomal protein uS4 family. Part of the 30S ribosomal subunit. Contacts protein S5. The interaction surface between S4 and S5 is involved in control of translational fidelity.

Its function is as follows. One of the primary rRNA binding proteins, it binds directly to 16S rRNA where it nucleates assembly of the body of the 30S subunit. With S5 and S12 plays an important role in translational accuracy. The protein is Small ribosomal subunit protein uS4 of Streptomyces avermitilis (strain ATCC 31267 / DSM 46492 / JCM 5070 / NBRC 14893 / NCIMB 12804 / NRRL 8165 / MA-4680).